We begin with the raw amino-acid sequence, 883 residues long: Mitogen-activated protein kinase kinase kinase YODA (883 aa).

3 disordered regions span residues 28 to 193 (GFAS…AEMF), 303 to 364 (CSPE…PPLL), and 376 to 396 (SAAT…TVSP). A compositionally biased stretch (low complexity) spans 57–72 (SRLPSRSPSPSTRVSR). A compositionally biased stretch (polar residues) spans 94 to 105 (VTSTDSGMNGSQ). The span at 143-165 (SVSSGSSVGDIPSDSLLSPLASD) shows a compositional bias: low complexity. 2 stretches are compositionally biased toward polar residues: residues 167–189 (ENGN…NKNS) and 314–328 (RMTS…QSGA). One can recognise a Protein kinase domain in the interval 400–656 (WKKGRLLGMG…AAQLLDHAFV (257 aa)). Residues 406–414 (LGMGSFGHV) and Lys429 each bind ATP. The active-site Proton acceptor is Asp525. 2 disordered regions span residues 712–773 (GSGF…GAIP) and 787–838 (EGIG…IQPG). Over residues 733-756 (SPIFHSHSPHISGRRSPSPISSPH) the composition is skewed to low complexity.

This sequence belongs to the protein kinase superfamily. STE Ser/Thr protein kinase family. MAP kinase kinase kinase subfamily. As to quaternary structure, interacts with ASK7. Interacts with BSK12/SSP. Binds to BASL and MPK6. In terms of tissue distribution, expressed in roots, leaves, guard cells, stems, flowers and siliques.

The protein localises to the cytoplasm. It localises to the cell cortex. Its subcellular location is the cell membrane. The enzyme catalyses L-seryl-[protein] + ATP = O-phospho-L-seryl-[protein] + ADP + H(+). It catalyses the reaction L-threonyl-[protein] + ATP = O-phospho-L-threonyl-[protein] + ADP + H(+). Its activity is regulated as follows. Contains an N-terminal autoinhibitory domain. Functions in a MAP kinase cascade that acts as a molecular switch to regulate the first cell fate decisions in the zygote and the early embryo. Promotes elongation of the zygote and development of its basal daughter cell into the extra-embryonic suspensor. In stomatal development, acts downstream of the LRR receptor TMM, but upstream of the MKK4/MKK5-MPK3/MPK6 module to regulate stomatal cell fate before the guard mother cell (GMC) is specified. Plays a central role in both guard cell identity and pattern formation. This MAPK cascade also functions downstream of the ER receptor in regulating coordinated local cell proliferation, which shapes the morphology of plant organs. Upon brassinosteroid signaling, is inhibited by phosphorylation of its auto-inhibitory N-terminal domain by the GSK3-like kinase ASK7. The chain is Mitogen-activated protein kinase kinase kinase YODA from Arabidopsis thaliana (Mouse-ear cress).